The sequence spans 155 residues: NADPH-dependent 7-cyano-7-deazaguanine reductase (155 aa).

The segment covering 1–20 (MMPNTDVSSLSMLGQQTETA) has biased composition (polar residues). The disordered stretch occupies residues 1-26 (MMPNTDVSSLSMLGQQTETAKSPEEA). Cys-53 serves as the catalytic Thioimide intermediate. Residue Asp-60 is the Proton donor of the active site. Substrate-binding positions include 75–77 (VES) and 94–95 (HE).

This sequence belongs to the GTP cyclohydrolase I family. QueF type 1 subfamily.

It localises to the cytoplasm. It carries out the reaction 7-aminomethyl-7-carbaguanine + 2 NADP(+) = 7-cyano-7-deazaguanine + 2 NADPH + 3 H(+). It participates in tRNA modification; tRNA-queuosine biosynthesis. In terms of biological role, catalyzes the NADPH-dependent reduction of 7-cyano-7-deazaguanine (preQ0) to 7-aminomethyl-7-deazaguanine (preQ1). This is NADPH-dependent 7-cyano-7-deazaguanine reductase from Rhizobium etli (strain CIAT 652).